The chain runs to 287 residues: 4-hydroxybenzoate octaprenyltransferase (287 aa).

The next 7 membrane-spanning stretches (helical) occupy residues 30–50 (ALWIASDGHPAPSLVAIFALG), 92–112 (IAIAVGLALVSFLLILPLNGL), 133–153 (FFAIPQAYLGIAFGFGIPMAF), 158–178 (DTVPMIAWAMLAANVFWSVAY), 207–227 (VLAIMLCYAAMLGIYVWLGAA), 232–252 (WPYWAGWAAAAGCSIYHYTLI), and 266–286 (HNNWLGGVLFAGIAAHYALAV).

The protein belongs to the UbiA prenyltransferase family. Mg(2+) is required as a cofactor.

The protein resides in the cell inner membrane. The enzyme catalyses all-trans-octaprenyl diphosphate + 4-hydroxybenzoate = 4-hydroxy-3-(all-trans-octaprenyl)benzoate + diphosphate. Its pathway is cofactor biosynthesis; ubiquinone biosynthesis. In terms of biological role, catalyzes the prenylation of para-hydroxybenzoate (PHB) with an all-trans polyprenyl group. Mediates the second step in the final reaction sequence of ubiquinone-8 (UQ-8) biosynthesis, which is the condensation of the polyisoprenoid side chain with PHB, generating the first membrane-bound Q intermediate 3-octaprenyl-4-hydroxybenzoate. In Burkholderia pseudomallei (strain 1106a), this protein is 4-hydroxybenzoate octaprenyltransferase.